The following is a 388-amino-acid chain: Mannitol-1-phosphate 5-dehydrogenase (388 aa).

5 to 16 (AVHFGGGNIGRG) contacts NAD(+). The active site involves lysine 213.

It belongs to the mannitol dehydrogenase family. Monomer.

The enzyme catalyses D-mannitol 1-phosphate + NAD(+) = beta-D-fructose 6-phosphate + NADH + H(+). In terms of biological role, catalyzes the NAD(H)-dependent interconversion of D-fructose 6-phosphate and D-mannitol 1-phosphate in the mannitol metabolic pathway. The polypeptide is Mannitol-1-phosphate 5-dehydrogenase (Penicillium rubens (strain ATCC 28089 / DSM 1075 / NRRL 1951 / Wisconsin 54-1255) (Penicillium chrysogenum)).